A 323-amino-acid chain; its full sequence is Voltage-dependent calcium channel gamma-2 subunit (323 aa).

A helical membrane pass occupies residues 10–30 (MLLTTVGAFAAFSLMTIAVGT). N48 carries an N-linked (GlcNAc...) asparagine glycan. 3 helical membrane passes run 104-124 (SSIF…CIAA), 134-154 (IILS…IGII), and 182-202 (FGAL…HMFI). The interval 233–261 (YQRRSRSSSRSTEPSHSRDASPVGIKGFN) is disordered. S253 carries the post-translational modification Phosphoserine. Y271 bears the Phosphotyrosine mark. Residue T321 is modified to Phosphothreonine.

The protein belongs to the PMP-22/EMP/MP20 family. CACNG subfamily. The L-type calcium channel is composed of five subunits: alpha-1, alpha-2/delta, beta and gamma. Interacts with the PDZ domains of DLG4/PSD-95 and DLG1/SAP97. May interact with GOPC. Acts as an auxiliary subunit for AMPA-selective glutamate receptors (AMPARs). Found in a complex with GRIA1, GRIA2, GRIA3, GRIA4, CNIH2, CNIH3, CACNG3, CACNG4, CACNG5, CACNG7 and CACNG8. Interacts with GRIA1 and GRIA2. Interacts with MPP2. Phosphorylation of Thr-321 impairs interaction with DLG1 and DLG4. Brain.

It localises to the membrane. Its subcellular location is the synapse. The protein resides in the synaptosome. Regulates the trafficking and gating properties of AMPA-selective glutamate receptors (AMPARs). Promotes their targeting to the cell membrane and synapses and modulates their gating properties by slowing their rates of activation, deactivation and desensitization. Does not show subunit-specific AMPA receptor regulation and regulates all AMPAR subunits. Thought to stabilize the calcium channel in an inactivated (closed) state. In Homo sapiens (Human), this protein is Voltage-dependent calcium channel gamma-2 subunit (CACNG2).